A 164-amino-acid polypeptide reads, in one-letter code: MDMTNAQRLILSNQYKMMTMLDPENAERYRRQQTIVERGFGLQMRELDRDFGEMSEDTCRTIINIMEMHHALQVSWDNLKDKQDLDERRIAFLGFDAATESRYLSYVRFMVNTEGRYTHFDSGTHGFNSQTPMWDKYQRMLAIWQSCPRQYHLSAVEISQIINA.

Belongs to the UPF0304 family.

The protein is UPF0304 protein YE1336 of Yersinia enterocolitica serotype O:8 / biotype 1B (strain NCTC 13174 / 8081).